Consider the following 277-residue polypeptide: Tumor necrosis factor-inducible gene 6 protein (277 aa).

Residues 1 to 17 form the signal peptide; sequence MIILIYLFLLLWEDTQG. The region spanning 36–129 is the Link domain; the sequence is GVYHREARSG…SERWDAYCYN (94 aa). Cystine bridges form between Cys-58–Cys-127, Cys-82–Cys-103, and Cys-135–Cys-161. N-linked (GlcNAc...) asparagine glycosylation occurs at Asn-118. A CUB domain is found at 135–247; it reads CGGVFTDPKQ…GGFQIKYVAM (113 aa). Ca(2+)-binding residues include Glu-183, Asp-191, Asp-232, Ser-234, and Val-235. Cys-188 and Cys-210 are joined by a disulfide. A glycan (N-linked (GlcNAc...) asparagine) is linked at Asn-258.

In terms of assembly, interacts (via Link domain) with inter-alpha-inhibitor (I-alpha-I) component bikunin. Interacts with ITIH2/HC2; this interaction is required for transesterification of the HC to hyaluronan. Interacts (via Link and CUB domains) with ITIH1. Chondroitin sulfate may be required for the stability of the complex. Interacts (via Link domain) with various C-X-C and C-C chemokines including PF4, CXCL8, CXCL11, CXCL12, CCL2, CCL7, CCL19, CCL21, and CCL27; this interaction interferes with chemokine binding to glycosaminoglycans. Interacts (primarily via Link domain) with BMP2; this interaction is inhibited by hyaluronan. Interacts (via both Link and CUB domains) with TNFSF11. Interacts (via CUB domain) with FN1 (via type III repeats 9-14); this interaction enhances fibronectin fibril assembly. TNFAIP6 may act as a bridging molecule between FN1 and THBS1. In terms of processing, N-glycosylated. Expressed in airway epithelium and submucosal gland (at protein level). Colocalizes with bikunin at the ciliary border. Present in bronchoalveolar lavage fluid (at protein level). Expressed in mesenchymal stem cells. Found in the synovial fluid of patients with rheumatoid arthritis.

Its subcellular location is the secreted. Its function is as follows. Major regulator of extracellular matrix organization during tissue remodeling. Catalyzes the transfer of a heavy chain (HC) from inter-alpha-inhibitor (I-alpha-I) complex to hyaluronan. Cleaves the ester bond between the C-terminus of the HC and GalNAc residue of the chondroitin sulfate chain in I-alpha-I complex followed by transesterification of the HC to hyaluronan. In the process, potentiates the antiprotease function of I-alpha-I complex through release of free bikunin. Acts as a catalyst in the formation of hyaluronan-HC oligomers and hyaluronan-rich matrix surrounding the cumulus cell-oocyte complex, a necessary step for oocyte fertilization. Assembles hyaluronan in pericellular matrices that serve as platforms for receptor clustering and signaling. Enables binding of hyaluronan deposited on the surface of macrophages to LYVE1 on lymphatic endothelium and facilitates macrophage extravasation. Alters hyaluronan binding to functionally latent CD44 on vascular endothelium, switching CD44 into an active state that supports leukocyte rolling. Modulates the interaction of chemokines with extracellular matrix components and proteoglycans on endothelial cell surface, likely preventing chemokine gradient formation. In a negative feedback mechanism, may limit excessive neutrophil recruitment at inflammatory sites by antagonizing the association of CXCL8 with glycosaminoglycans on vascular endothelium. Has a role in osteogenesis and bone remodeling. Inhibits BMP2-dependent differentiation of mesenchymal stem cell to osteoblasts. Protects against bone erosion during inflammation by inhibiting TNFSF11/RANKL-dependent osteoclast activation. This chain is Tumor necrosis factor-inducible gene 6 protein (TNFAIP6), found in Homo sapiens (Human).